A 411-amino-acid polypeptide reads, in one-letter code: Arginine deiminase (411 aa).

Catalysis depends on cysteine 401, which acts as the Amidino-cysteine intermediate.

The protein belongs to the arginine deiminase family.

It localises to the cytoplasm. The catalysed reaction is L-arginine + H2O = L-citrulline + NH4(+). It functions in the pathway amino-acid degradation; L-arginine degradation via ADI pathway; carbamoyl phosphate from L-arginine: step 1/2. This is Arginine deiminase from Streptococcus equi subsp. zooepidemicus (strain H70).